The chain runs to 133 residues: Peptidyl-prolyl cis-trans isomerase PIN4 (133 aa).

The segment covering 1-29 (MGKNDKKGADKGGKAKGGDKGKDAKDTKD) has biased composition (basic and acidic residues). The segment at 1–42 (MGKNDKKGADKGGKAKGGDKGKDAKDTKDSGSGGKAKGAQSI) is disordered. A PpiC domain is found at 39–131 (AQSINVRHIL…FGYHIIMVEG (93 aa)).

This sequence belongs to the PpiC/parvulin rotamase family. PIN4 subfamily.

It carries out the reaction [protein]-peptidylproline (omega=180) = [protein]-peptidylproline (omega=0). Functionally, PPIases accelerate the folding of proteins. It catalyzes the cis-trans isomerization of proline imidic peptide bonds in oligopeptides. The polypeptide is Peptidyl-prolyl cis-trans isomerase PIN4 (PIN4) (Gibberella zeae (strain ATCC MYA-4620 / CBS 123657 / FGSC 9075 / NRRL 31084 / PH-1) (Wheat head blight fungus)).